A 439-amino-acid chain; its full sequence is Xaa-Pro dipeptidase (439 aa).

Mn(2+) is bound by residues aspartate 244, aspartate 255, histidine 335, glutamate 380, and glutamate 419.

It belongs to the peptidase M24B family. Bacterial-type prolidase subfamily. Mn(2+) serves as cofactor.

It catalyses the reaction Xaa-L-Pro dipeptide + H2O = an L-alpha-amino acid + L-proline. Splits dipeptides with a prolyl residue in the C-terminal position. The sequence is that of Xaa-Pro dipeptidase from Shewanella oneidensis (strain ATCC 700550 / JCM 31522 / CIP 106686 / LMG 19005 / NCIMB 14063 / MR-1).